A 654-amino-acid polypeptide reads, in one-letter code: tRNA 5-methylaminomethyl-2-thiouridine biosynthesis bifunctional protein MnmC (654 aa).

The interval methionine 1–glutamine 235 is tRNA (mnm(5)s(2)U34)-methyltransferase. Residues valine 261–glycine 654 form an FAD-dependent cmnm(5)s(2)U34 oxidoreductase region.

The protein in the N-terminal section; belongs to the methyltransferase superfamily. tRNA (mnm(5)s(2)U34)-methyltransferase family. It in the C-terminal section; belongs to the DAO family. FAD serves as cofactor.

Its subcellular location is the cytoplasm. The catalysed reaction is 5-aminomethyl-2-thiouridine(34) in tRNA + S-adenosyl-L-methionine = 5-methylaminomethyl-2-thiouridine(34) in tRNA + S-adenosyl-L-homocysteine + H(+). Functionally, catalyzes the last two steps in the biosynthesis of 5-methylaminomethyl-2-thiouridine (mnm(5)s(2)U) at the wobble position (U34) in tRNA. Catalyzes the FAD-dependent demodification of cmnm(5)s(2)U34 to nm(5)s(2)U34, followed by the transfer of a methyl group from S-adenosyl-L-methionine to nm(5)s(2)U34, to form mnm(5)s(2)U34. This Pseudomonas aeruginosa (strain UCBPP-PA14) protein is tRNA 5-methylaminomethyl-2-thiouridine biosynthesis bifunctional protein MnmC.